A 281-amino-acid polypeptide reads, in one-letter code: Bifunctional protein FolD (281 aa).

NADP(+) contacts are provided by residues G164 to S166 and S189.

The protein belongs to the tetrahydrofolate dehydrogenase/cyclohydrolase family. Homodimer.

The enzyme catalyses (6R)-5,10-methylene-5,6,7,8-tetrahydrofolate + NADP(+) = (6R)-5,10-methenyltetrahydrofolate + NADPH. It carries out the reaction (6R)-5,10-methenyltetrahydrofolate + H2O = (6R)-10-formyltetrahydrofolate + H(+). Its pathway is one-carbon metabolism; tetrahydrofolate interconversion. Catalyzes the oxidation of 5,10-methylenetetrahydrofolate to 5,10-methenyltetrahydrofolate and then the hydrolysis of 5,10-methenyltetrahydrofolate to 10-formyltetrahydrofolate. The polypeptide is Bifunctional protein FolD (Enterococcus faecalis (strain ATCC 700802 / V583)).